A 463-amino-acid polypeptide reads, in one-letter code: Nuclear hormone receptor family member nhr-3 (463 aa).

The segment at residues 50-125 (STICSVCCDE…VGMEPDAIRP (76 aa)) is a DNA-binding region (nuclear receptor). NR C4-type zinc fingers lie at residues 53-73 (CSVC…CFGC) and 89-113 (CRYS…FQKC). Over residues 121 to 131 (DAIRPDRDKTG) the composition is skewed to basic and acidic residues. The interval 121–143 (DAIRPDRDKTGRQKNPRRNTEGS) is disordered. One can recognise an NR LBD domain in the interval 199–462 (EIENIVIQLQ…VLEELLFLDR (264 aa)).

It belongs to the nuclear hormone receptor family.

It localises to the nucleus. In terms of biological role, orphan nuclear receptor. The sequence is that of Nuclear hormone receptor family member nhr-3 (nhr-3) from Caenorhabditis elegans.